The primary structure comprises 96 residues: Small ribosomal subunit protein bS18 (96 aa).

Positions methionine 1–arginine 18 are enriched in basic residues. Residues methionine 1–glutamine 21 are disordered.

It belongs to the bacterial ribosomal protein bS18 family. Part of the 30S ribosomal subunit. Forms a tight heterodimer with protein bS6.

In terms of biological role, binds as a heterodimer with protein bS6 to the central domain of the 16S rRNA, where it helps stabilize the platform of the 30S subunit. This Methylibium petroleiphilum (strain ATCC BAA-1232 / LMG 22953 / PM1) protein is Small ribosomal subunit protein bS18.